The chain runs to 268 residues: Nickel import ATP-binding protein NikE (268 aa).

The 249-residue stretch at 4-252 folds into the ABC transporter domain; it reads LNVSDLSHHY…SSDAGRVLQN (249 aa). 45–52 lines the ATP pocket; it reads GRSGCGKS.

Belongs to the ABC transporter superfamily. Nickel importer (TC 3.A.1.5.3) family. In terms of assembly, the complex is composed of two ATP-binding proteins (NikD and NikE), two transmembrane proteins (NikB and NikC) and a solute-binding protein (NikA).

The protein resides in the cell inner membrane. It catalyses the reaction Ni(2+)(out) + ATP + H2O = Ni(2+)(in) + ADP + phosphate + H(+). Its function is as follows. Part of the ABC transporter complex NikABCDE involved in nickel import. Responsible for energy coupling to the transport system. In Escherichia coli O157:H7, this protein is Nickel import ATP-binding protein NikE.